We begin with the raw amino-acid sequence, 314 residues long: Lysophospholipase D GDPD1 (314 aa).

At 1–3 (MSS) the chain is on the extracellular side. Residues 4–24 (TAAFCLLSTLGGYLVTSFLLL) form a helical membrane-spanning segment. The Cytoplasmic portion of the chain corresponds to 25 to 195 (KYPALLHQRK…VDKCYKENSD (171 aa)). The GP-PDE domain maps to 40 to 309 (SRHISHRGGA…DYPTKLKEFL (270 aa)). Residues Glu72, Asp74, and His87 each coordinate a divalent metal cation. Residues 196 to 216 (IPILFSLQRVLLILGLFFTGL) form a helical membrane-spanning segment. The Extracellular segment spans residues 217 to 314 (LPFVPIREQF…LKEFLNNMSA (98 aa)).

It belongs to the glycerophosphoryl diester phosphodiesterase family.

It is found in the cytoplasm. It localises to the membrane. The protein resides in the perinuclear region. Its subcellular location is the endoplasmic reticulum. The catalysed reaction is a 1-O-alkyl-sn-glycero-3-phosphocholine + H2O = a 1-O-alkyl-sn-glycero-3-phosphate + choline + H(+). The enzyme catalyses 1-hexadecanoyl-sn-glycero-3-phosphocholine + H2O = 1-hexadecanoyl-sn-glycero-3-phosphate + choline + H(+). It carries out the reaction 1-hexadecanoyl-sn-glycero-3-phosphoethanolamine + H2O = 1-hexadecanoyl-sn-glycero-3-phosphate + ethanolamine + H(+). It catalyses the reaction N-hexadecanoyl-sn-glycero-3-phosphoethanolamine + H2O = N-hexadecanoylethanolamine + sn-glycerol 3-phosphate + H(+). The catalysed reaction is N-(5Z,8Z,11Z,14Z-eicosatetraenoyl)-1-(9Z-octadecenoyl)-sn-glycero-3-phosphoethanolamine + H2O = N-(5Z,8Z,11Z,14Z-eicosatetraenoyl)-ethanolamine + 1-(9Z-octadecenoyl)-sn-glycero-3-phosphate + H(+). The enzyme catalyses N,1-di-(9Z-octadecenoyl)-sn-glycero-3-phosphoethanolamine + H2O = N-(9Z-octadecenoyl) ethanolamine + 1-(9Z-octadecenoyl)-sn-glycero-3-phosphate + H(+). It carries out the reaction N-hexadecanoyl-1-(9Z-octadecenoyl)-sn-glycero-3-phosphoethanolamine + H2O = N-hexadecanoylethanolamine + 1-(9Z-octadecenoyl)-sn-glycero-3-phosphate + H(+). It catalyses the reaction 1-O-hexadecyl-sn-glycero-3-phosphocholine + H2O = 1-O-hexadecyl-sn-glycero-3-phosphate + choline + H(+). The catalysed reaction is 1-(9Z-octadecenoyl)-sn-glycero-3-phosphocholine + H2O = 1-(9Z-octadecenoyl)-sn-glycero-3-phosphate + choline + H(+). The enzyme catalyses N,1-dihexadecanoyl-sn-glycero-3-phosphoethanolamine + H2O = N-hexadecanoylethanolamine + 1-hexadecanoyl-sn-glycero-3-phosphate + H(+). It carries out the reaction 1-O-(1Z-octadecenyl)-sn-glycero-3-phospho-(N-5Z,8Z,11Z,14Z-eicosatetraenoyl)-ethanolamine + H2O = 1-O-(1Z-octadecenyl)-sn-glycero-3-phosphate + N-(5Z,8Z,11Z,14Z-eicosatetraenoyl)-ethanolamine + H(+). It catalyses the reaction 1-O-(1Z-octadecenyl)-sn-glycero-3-phospho-(N-9Z-octadecenoyl)-ethanolamine + H2O = 1-O-(1Z-octadecenyl)-sn-glycero-3-phosphate + N-(9Z-octadecenoyl) ethanolamine + H(+). The catalysed reaction is 1-O-(1Z-octadecenyl)-sn-glycero-3-phospho-N-hexadecanoyl-ethanolamine + H2O = 1-O-(1Z-octadecenyl)-sn-glycero-3-phosphate + N-hexadecanoylethanolamine + H(+). Its activity is regulated as follows. Lysophospholipase D activity is increased by magnesium and manganese and inhibited by calcium in a concentration dependent manner. Loss of lysophospholipase D activity by addition of EDTA. Its function is as follows. Hydrolyzes lysoglycerophospholipids to produce lysophosphatidic acid (LPA) and the corresponding amines. Shows a preference for 1-O-alkyl-sn-glycero-3-phosphocholine (lyso-PAF), lysophosphatidylethanolamine (lyso-PE) and lysophosphatidylcholine (lyso-PC). May be involved in bioactive N-acylethanolamine biosynthesis from both N-acyl-lysoplasmenylethanolamin (N-acyl-lysoPlsEt) and N-acyl-lysophosphatidylethanolamin (N-acyl-lysoPE). In addition, hydrolyzes glycerophospho-N-acylethanolamine to N-acylethanolamine. Does not display glycerophosphodiester phosphodiesterase activity, since it cannot hydrolyze either glycerophosphoinositol or glycerophosphocholine. The sequence is that of Lysophospholipase D GDPD1 from Rattus norvegicus (Rat).